A 363-amino-acid chain; its full sequence is Cobalt-precorrin-5B C(1)-methyltransferase (363 aa).

This sequence belongs to the CbiD family.

The catalysed reaction is Co-precorrin-5B + S-adenosyl-L-methionine = Co-precorrin-6A + S-adenosyl-L-homocysteine. Its pathway is cofactor biosynthesis; adenosylcobalamin biosynthesis; cob(II)yrinate a,c-diamide from sirohydrochlorin (anaerobic route): step 6/10. Catalyzes the methylation of C-1 in cobalt-precorrin-5B to form cobalt-precorrin-6A. The protein is Cobalt-precorrin-5B C(1)-methyltransferase of Burkholderia pseudomallei (strain K96243).